The primary structure comprises 152 residues: Transcriptional regulator MraZ (152 aa).

2 consecutive SpoVT-AbrB domains span residues 5 to 52 (ATLV…PLPE) and 81 to 124 (ASEC…DETT).

Belongs to the MraZ family. Forms oligomers.

The protein resides in the cytoplasm. The protein localises to the nucleoid. In terms of biological role, negatively regulates its own expression and that of the subsequent genes in the proximal part of the division and cell wall (dcw) gene cluster. Acts by binding directly to DNA. May also regulate the expression of genes outside the dcw cluster. In Shigella flexneri serotype 5b (strain 8401), this protein is Transcriptional regulator MraZ.